The primary structure comprises 567 residues: Potassium-transporting ATPase potassium-binding subunit (567 aa).

12 consecutive transmembrane segments (helical) span residues 11 to 31 (LYLL…AALL), 67 to 87 (AAAI…LQRW), 136 to 156 (GLAV…VALV), 179 to 199 (LWLL…QGVV), 255 to 275 (FSNW…VVMF), 286 to 306 (VVLL…VYLA), 333 to 353 (FGVL…CGAV), 363 to 383 (LGGG…GGVG), 385 to 405 (GLYG…LMIG), 422 to 442 (LVSV…AIAV), 489 to 509 (LMLA…VLAL), and 532 to 552 (LFVV…YIPA).

The protein belongs to the KdpA family. In terms of assembly, the system is composed of three essential subunits: KdpA, KdpB and KdpC.

The protein resides in the cell inner membrane. Functionally, part of the high-affinity ATP-driven potassium transport (or Kdp) system, which catalyzes the hydrolysis of ATP coupled with the electrogenic transport of potassium into the cytoplasm. This subunit binds the periplasmic potassium ions and delivers the ions to the membrane domain of KdpB through an intramembrane tunnel. The polypeptide is Potassium-transporting ATPase potassium-binding subunit (Laribacter hongkongensis (strain HLHK9)).